The primary structure comprises 431 residues: Glutamate-1-semialdehyde 2,1-aminomutase (431 aa).

Residue Lys-269 is modified to N6-(pyridoxal phosphate)lysine.

The protein belongs to the class-III pyridoxal-phosphate-dependent aminotransferase family. HemL subfamily. In terms of assembly, homodimer. It depends on pyridoxal 5'-phosphate as a cofactor.

The protein resides in the cytoplasm. The catalysed reaction is (S)-4-amino-5-oxopentanoate = 5-aminolevulinate. The protein operates within porphyrin-containing compound metabolism; protoporphyrin-IX biosynthesis; 5-aminolevulinate from L-glutamyl-tRNA(Glu): step 2/2. It functions in the pathway porphyrin-containing compound metabolism; chlorophyll biosynthesis. The chain is Glutamate-1-semialdehyde 2,1-aminomutase from Chlorobium phaeobacteroides (strain DSM 266 / SMG 266 / 2430).